Reading from the N-terminus, the 86-residue chain is Small ribosomal subunit protein uS17 (86 aa).

Belongs to the universal ribosomal protein uS17 family. As to quaternary structure, part of the 30S ribosomal subunit.

One of the primary rRNA binding proteins, it binds specifically to the 5'-end of 16S ribosomal RNA. The polypeptide is Small ribosomal subunit protein uS17 (Streptococcus equi subsp. equi (strain 4047)).